We begin with the raw amino-acid sequence, 821 residues long: Calpain-3 (821 aa).

Residues Met1 to Gly37 are disordered. The Calpain catalytic domain maps to Leu74–Thr417. Catalysis depends on residues Cys129, His334, and Asn358. The domain III stretch occupies residues Ala418–Asn586. The linker stretch occupies residues Thr587–Glu649. A disordered region spans residues Ile603–Gln651. The span at Glu622–Gly634 shows a compositional bias: basic and acidic residues. EF-hand domains follow at residues Glu649–Lys683, Phe692–Lys725, Lys722–His757, and Val787–Ala821. The segment at Glu650–Tyr820 is domain IV. Residues Ala662, Asp665, Glu667, Glu672, Asp705, Asp707, Ser709, Arg711, Glu716, Asp735, Asp737, Ser739, Thr741, Glu746, Asp800, Asp802, Asp804, and Ile806 each contribute to the Ca(2+) site.

Belongs to the peptidase C2 family. In terms of assembly, homodimer; via EF-hand domain 4. Interacts with TTN/titin. Interacts with CMYA5; this interaction, which results in CMYA5 proteolysis, may protect CAPN3 from autolysis. Interacts with SIMC1. Interacts with UTP25; the interaction is required for CAPN3 translocation to the nucleolus. Skeletal muscle.

It localises to the cytoplasm. The protein localises to the nucleus. Its subcellular location is the nucleolus. It catalyses the reaction Broad endopeptidase activity.. Activated by micromolar concentrations of calcium and inhibited by calpastatin. Functionally, calcium-regulated non-lysosomal thiol-protease. Proteolytically cleaves CTBP1 at 'His-399'. Mediates, with UTP25, the proteasome-independent degradation of p53/TP53. This chain is Calpain-3 (Capn3), found in Rattus norvegicus (Rat).